Consider the following 324-residue polypeptide: Lipoyl synthase (324 aa).

Residues Cys65, Cys70, Cys76, Cys91, Cys95, Cys98, and Ser302 each contribute to the [4Fe-4S] cluster site. In terms of domain architecture, Radical SAM core spans 77 to 291 (WEDREATFLI…AQYAEGLGFA (215 aa)).

It belongs to the radical SAM superfamily. Lipoyl synthase family. The cofactor is [4Fe-4S] cluster.

The protein resides in the cytoplasm. The catalysed reaction is [[Fe-S] cluster scaffold protein carrying a second [4Fe-4S](2+) cluster] + N(6)-octanoyl-L-lysyl-[protein] + 2 oxidized [2Fe-2S]-[ferredoxin] + 2 S-adenosyl-L-methionine + 4 H(+) = [[Fe-S] cluster scaffold protein] + N(6)-[(R)-dihydrolipoyl]-L-lysyl-[protein] + 4 Fe(3+) + 2 hydrogen sulfide + 2 5'-deoxyadenosine + 2 L-methionine + 2 reduced [2Fe-2S]-[ferredoxin]. Its pathway is protein modification; protein lipoylation via endogenous pathway; protein N(6)-(lipoyl)lysine from octanoyl-[acyl-carrier-protein]: step 2/2. Its function is as follows. Catalyzes the radical-mediated insertion of two sulfur atoms into the C-6 and C-8 positions of the octanoyl moiety bound to the lipoyl domains of lipoate-dependent enzymes, thereby converting the octanoylated domains into lipoylated derivatives. This chain is Lipoyl synthase, found in Mycobacterium ulcerans (strain Agy99).